The chain runs to 882 residues: Leucine--tRNA ligase (882 aa).

Residues 43 to 53 (PYPSGRIHMGH) carry the 'HIGH' region motif. The short motif at 634 to 638 (KMSKS) is the 'KMSKS' region element. An ATP-binding site is contributed by Lys-637.

Belongs to the class-I aminoacyl-tRNA synthetase family.

It is found in the cytoplasm. The enzyme catalyses tRNA(Leu) + L-leucine + ATP = L-leucyl-tRNA(Leu) + AMP + diphosphate. The protein is Leucine--tRNA ligase of Rhodopseudomonas palustris (strain BisB18).